We begin with the raw amino-acid sequence, 110 residues long: UPF0122 protein SMU_1061 (110 aa).

The protein belongs to the UPF0122 family.

In terms of biological role, might take part in the signal recognition particle (SRP) pathway. This is inferred from the conservation of its genetic proximity to ftsY/ffh. May be a regulatory protein. The chain is UPF0122 protein SMU_1061 (ylxM) from Streptococcus mutans serotype c (strain ATCC 700610 / UA159).